The primary structure comprises 59 residues: Putative conotoxin (59 aa).

A signal peptide spans M1–A25. Residues S26 to S47 constitute a propeptide that is removed on maturation.

This sequence belongs to the conotoxin A superfamily. Expressed by the venom duct.

The protein resides in the secreted. Functionally, acts as a neurotoxin. The sequence is that of Putative conotoxin from Conus imperialis (Imperial cone).